Here is a 149-residue protein sequence, read N- to C-terminus: Oocyte-expressed protein homolog (149 aa).

Residues 1-22 form a disordered region; the sequence is MVDDAGAAESQRGKQTPAHSLE. One can recognise a KH; atypical domain in the interval 49 to 110; the sequence is PLVFYLEAWL…RVQNRVKSML (62 aa).

It belongs to the KHDC1 family. Component of the subcortical maternal complex (SCMC), at least composed of NLRP5, KHDC3L, OOEP, and TLE6 isoform 1. Within the complex, interacts with NLRP5, KHDC3L and TLE6 isoform 1. As part of the SCMC interacts with the SCMC-associated protein NLRP4F. The SCMC may facilitate translocation of its components between the nuclear and cytoplasmic compartments. Forms a scaffold complex with KHDC3L/FILIA, and interacts with BLM and TRIM25 at DNA replication forks.

It localises to the cytoplasm. It is found in the nucleus. Its function is as follows. Component of the subcortical maternal complex (SCMC), a multiprotein complex that plays a key role in early embryonic development. The SCMC complex is a structural constituent of cytoplasmic lattices, which consist in fibrous structures found in the cytoplasm of oocytes and preimplantation embryos. They are required to store maternal proteins critical for embryonic development, such as proteins that control epigenetic reprogramming of the preimplantation embryo, and prevent their degradation or activation. As part of the OOEP-KHDC3 scaffold, recruits BLM and TRIM25 to DNA replication forks, thereby promoting the ubiquitination of BLM by TRIM25, enhancing BLM retainment at replication forks and therefore promoting stalled replication fork restart. Positively regulates the homologous recombination-mediated DNA double-strand break (DSB) repair pathway by regulating ATM activation and RAD51 recruitment to DSBs in oocytes. Thereby contributes to oocyte survival and the resumption and completion of meiosis. This chain is Oocyte-expressed protein homolog, found in Homo sapiens (Human).